The primary structure comprises 598 residues: Nuclear receptor subfamily 4 group A member 1 (598 aa).

2 disordered regions span residues 1–43 (MPCI…PEAA) and 128–151 (GSDYYGSPCSAPSPSTPSFQPPQL). Residues 134 to 145 (SPCSAPSPSTPS) are compositionally biased toward low complexity. Residues 171-466 (RAWTEQLPKA…PAEGKLIFCS (296 aa)) form a required for nuclear import region. The segment at residues 264-339 (EGRCAVCGDN…VGMVKEVVRT (76 aa)) is a DNA-binding region (nuclear receptor). 2 NR C4-type zinc fingers span residues 267-287 (CAVCGDNASCQHYGVRTCEGC) and 303-327 (CLANKDCPVDKRRRNRCQFCRFQKC). The required for binding NBRE-containing DNA stretch occupies residues 268–354 (AVCGDNASCQ…RRGRLPSKPK (87 aa)). The tract at residues 299 to 361 (AKYICLANKD…KPKQPPETSP (63 aa)) is required for the interaction with RXRA. Ser341 is modified (phosphoserine; by PKA). Residues 341–361 (SLKGRRGRLPSKPKQPPETSP) form a disordered region. Ser351 bears the Phosphoserine; by PKA, RPS6KA1 and RPS6KA3 mark. Residues 360 to 595 (SPAHLLTSLV…PIVDKIFMDT (236 aa)) form the NR LBD domain. Positions 521–544 (PRRVEELQNRIASCLKEHVSAEAG) are binds lipopolysaccharide. The interval 584-595 (PPPIVDKIFMDT) is AF-2.

The protein belongs to the nuclear hormone receptor family. NR4 subfamily. In terms of assembly, binds the NGFI-B response element (NBRE) as a monomer. Binds the Nur response element (NurRE), consisting of two inverse NBRE-related octanucleotide repeats separated by 6 base-pairs, as a dimer. Interacts (via N-terminus) with NLRP3 (via LRR repeat domain); the interaction is direct, requires binding of NR4A1/Nur77 to NBRE-containing dsDNA and lipopolysaccharide, and leads to non-canonical NLRP3 inflammasome activation. Interacts with GADD45GIP1. Interacts with STK11. Interacts with IFI27. Heterodimer (via DNA-binding domain) with RXRA (via C-terminus); DNA-binding of the heterodimer is enhanced by 9-cis retinoic acid. Competes for the RXRA interaction with EP300 and thereby attenuates EP300 mediated acetylation of RXRA. Interacts with NCOA1. Interacts with NCOA2. Interacts with NCOA3. The cofactor is Zn(2+). Phosphorylated at Ser-351 by RPS6KA1 and RPS6KA3 in response to mitogenic or stress stimuli. In terms of processing, acetylated by p300/CBP, acetylation increases stability. Deacetylated by HDAC1.

It is found in the nucleus. Its subcellular location is the cytoplasm. The protein resides in the cytosol. The protein localises to the mitochondrion. Functionally, orphan nuclear receptor. Binds the NGFI-B response element (NBRE) 5'-AAAGGTCA-3'. Binds 9-cis-retinoic acid outside of its ligand-binding (NR LBD) domain. Participates in energy homeostasis by sequestrating the kinase STK11 in the nucleus, thereby attenuating cytoplasmic AMPK activation. Regulates the inflammatory response in macrophages by regulating metabolic adaptations during inflammation, including repressing the transcription of genes involved in the citric acid cycle (TCA). Inhibits NF-kappa-B signaling by binding to low-affinity NF-kappa-B binding sites, such as at the IL2 promoter. May act concomitantly with NR4A2 in regulating the expression of delayed-early genes during liver regeneration. Plays a role in the vascular response to injury. In terms of biological role, in the cytosol, upon its detection of both bacterial lipopolysaccharide (LPS) and NBRE-containing mitochondrial DNA released by GSDMD pores during pyroptosis, it promotes non-canonical NLRP3 inflammasome activation by stimulating association of NLRP3 and NEK7. The chain is Nuclear receptor subfamily 4 group A member 1 (NR4A1) from Bos taurus (Bovine).